Consider the following 153-residue polypeptide: Flagellar assembly factor FliW (153 aa).

It belongs to the FliW family. As to quaternary structure, interacts with translational regulator CsrA and flagellin(s).

The protein localises to the cytoplasm. In terms of biological role, acts as an anti-CsrA protein, binds CsrA and prevents it from repressing translation of its target genes, one of which is flagellin. Binds to flagellin and participates in the assembly of the flagellum. The chain is Flagellar assembly factor FliW from Heliobacterium modesticaldum (strain ATCC 51547 / Ice1).